A 190-amino-acid polypeptide reads, in one-letter code: Guanylate kinase (190 aa).

A Guanylate kinase-like domain is found at 3–185 (NYIFIISAPS…SLEQLCKYFE (183 aa)). 10–17 (APSGAGKS) serves as a coordination point for ATP.

Belongs to the guanylate kinase family.

The protein localises to the cytoplasm. The enzyme catalyses GMP + ATP = GDP + ADP. Essential for recycling GMP and indirectly, cGMP. The polypeptide is Guanylate kinase (Francisella tularensis subsp. holarctica (strain LVS)).